We begin with the raw amino-acid sequence, 464 residues long: Myrosinase 1 (464 aa).

Residue glutamine 19 coordinates substrate. Zn(2+) contacts are provided by histidine 39 and aspartate 52. Residues histidine 122 and asparagine 166 each coordinate substrate. Catalysis depends on glutamate 167, which acts as the Nucleophile. Glutamate 374 (proton donor) is an active-site residue. Asparagine 397 carries N-linked (GlcNAc...) asparagine glycosylation.

In terms of assembly, homodimer. Expressed in the skeletal muscle tissues surrounding the head, abdomen and thorax. Not expressed in flight muscles (at protein level).

The catalysed reaction is a thioglucoside + H2O = a sugar + a thiol.. Its function is as follows. Hydrolyzes glucosinolates to a labile aglycone. This rapidly undergoes spontaneous rearrangement, eliminating sulfur to yield a number of toxic metabolites. Thereby developing a chemical defense system that exploits and mimics the host plant. This is Myrosinase 1 from Brevicoryne brassicae (Mealy cabbage aphid).